Here is a 156-residue protein sequence, read N- to C-terminus: Endoribonuclease YbeY (156 aa).

His-117, His-121, and His-127 together coordinate Zn(2+).

The protein belongs to the endoribonuclease YbeY family. Requires Zn(2+) as cofactor.

The protein resides in the cytoplasm. Single strand-specific metallo-endoribonuclease involved in late-stage 70S ribosome quality control and in maturation of the 3' terminus of the 16S rRNA. This chain is Endoribonuclease YbeY, found in Shewanella pealeana (strain ATCC 700345 / ANG-SQ1).